The following is a 603-amino-acid chain: Putative lipase atg15 (603 aa).

Residues 1 to 20 lie on the Cytoplasmic side of the membrane; sequence MDQPHRRTRKWHLMDLSVST. The helical; Signal-anchor for type II membrane protein transmembrane segment at 21–41 threads the bilayer; it reads LLMSLALVLPSCVSAYQPVYF. Over 42-603 the chain is Lumenal; the sequence is RSQEATPFIP…ITPAPILIDL (562 aa). Asn-166, Asn-201, Asn-223, Asn-281, and Asn-305 each carry an N-linked (GlcNAc...) asparagine glycan. Ser-321 (charge relay system) is an active-site residue. N-linked (GlcNAc...) asparagine glycosylation is present at Asn-467.

The protein belongs to the AB hydrolase superfamily. Lipase family. As to quaternary structure, binds to both phosphatidylinositol (PI) and phosphatidylinositol 3,5-bisphosphate (PIP2).

The protein resides in the endosome. The protein localises to the multivesicular body membrane. It localises to the prevacuolar compartment membrane. It catalyses the reaction a triacylglycerol + H2O = a diacylglycerol + a fatty acid + H(+). Lipase which is essential for lysis of subvacuolar cytoplasm to vacuole targeted bodies and intravacuolar autophagic bodies. Involved in the lysis of intravacuolar multivesicular body (MVB) vesicles. The intravacuolar membrane disintegration by atg15 is critical to life span extension. This chain is Putative lipase atg15 (atg15), found in Emericella nidulans (strain FGSC A4 / ATCC 38163 / CBS 112.46 / NRRL 194 / M139) (Aspergillus nidulans).